We begin with the raw amino-acid sequence, 300 residues long: Heme A synthase (300 aa).

Residues 1–8 are Cytoplasmic-facing; that stretch reads MLKEKNLK. Residues 9–29 traverse the membrane as a helical segment; it reads WLSLFTTVLMLFVQIGGALVT. Over 30-64 the chain is Extracellular; sequence KTGSADGCGSSWPLCHGKFVPTHIPKETLIELAHR. A disulfide bridge connects residues C37 and C44. The active site involves E60. H63 lines the heme o pocket. A helical membrane pass occupies residues 65 to 85; that stretch reads GVSGLALLSVTWLVILSIKYI. The Cytoplasmic segment spans residues 86 to 92; that stretch reads GHKKETK. Residues 93 to 113 form a helical membrane-spanning segment; sequence FLCYMSIGFIFAQALIGAAAV. Residues 114-123 lie on the Extracellular side of the membrane; sequence MWQQNGFVLA. Residues 124–144 form a helical membrane-spanning segment; it reads LHFGISLISFSAVFLLTLLIF. H125 serves as a coordination point for heme o. Topologically, residues 145 to 163 are cytoplasmic; sequence EVDQKFDATKLILQPKLRR. The helical transmembrane segment at 164–184 threads the bilayer; sequence HTIGLTSFIYFVIYSGALVRH. Topologically, residues 185 to 218 are extracellular; it reads EKASLACSSWPLCRKGAFILPQNFYEWVQMSHRT. Residues C191 and C197 are joined by a disulfide bond. Heme b is bound at residue H216. The chain crosses the membrane as a helical span at residues 219 to 239; the sequence is LAFILFIWLTYVAFHAMRNYA. Topologically, residues 240–249 are cytoplasmic; that stretch reads QYRVIKYGYM. The helical transmembrane segment at 250–270 threads the bilayer; it reads IAFILICLQVTTGALTIFTAV. Residues 271-275 are Extracellular-facing; sequence NLYIA. Residues 276–296 form a helical membrane-spanning segment; that stretch reads LLHALFITLLFGLLCYFILLI. H278 provides a ligand contact to heme b. At 297 to 300 the chain is on the cytoplasmic side; sequence SRAK.

It belongs to the COX15/CtaA family. Type 1 subfamily. In terms of assembly, interacts with CtaB. Requires heme b as cofactor.

It is found in the cell membrane. It catalyses the reaction Fe(II)-heme o + 2 A + H2O = Fe(II)-heme a + 2 AH2. The protein operates within porphyrin-containing compound metabolism; heme A biosynthesis; heme A from heme O: step 1/1. Its function is as follows. Catalyzes the conversion of heme O to heme A by two successive hydroxylations of the methyl group at C8. The first hydroxylation forms heme I, the second hydroxylation results in an unstable dihydroxymethyl group, which spontaneously dehydrates, resulting in the formyl group of heme A. The protein is Heme A synthase of Macrococcus caseolyticus (strain JCSC5402) (Macrococcoides caseolyticum).